The following is a 647-amino-acid chain: Threonine--tRNA ligase (647 aa).

A TGS domain is found at 1–61; sequence MIKITFPDGA…EEDGSIEIVT (61 aa). A catalytic region spans residues 240 to 538; it reads DHRKLGKELD…LIETYKGAFP (299 aa). Positions 334, 385, and 515 each coordinate Zn(2+).

It belongs to the class-II aminoacyl-tRNA synthetase family. As to quaternary structure, homodimer. It depends on Zn(2+) as a cofactor.

It localises to the cytoplasm. The catalysed reaction is tRNA(Thr) + L-threonine + ATP = L-threonyl-tRNA(Thr) + AMP + diphosphate + H(+). Catalyzes the attachment of threonine to tRNA(Thr) in a two-step reaction: L-threonine is first activated by ATP to form Thr-AMP and then transferred to the acceptor end of tRNA(Thr). Also edits incorrectly charged L-seryl-tRNA(Thr). The protein is Threonine--tRNA ligase of Streptococcus pyogenes serotype M28 (strain MGAS6180).